The primary structure comprises 430 residues: Pre-B-cell leukemia transcription factor 2 (430 aa).

Residues 1 to 52 (MDERLLGPPPPGGGRGGLGLVGAEPGGPGEPPGGGDPGGGSGGVPGGRGKQD) form a disordered region. A compositionally biased stretch (gly residues) spans 13 to 48 (GGRGGLGLVGAEPGGPGEPPGGGDPGGGSGGVPGGR). One can recognise a PBC domain in the interval 48 to 243 (RGKQDIGDIL…VMILRSRFLD (196 aa)). Positions 55–134 (DILQQIMTIT…EGVAGPEKGG (80 aa)) are PBC-A. A phosphoserine mark is found at Ser-136, Ser-151, and Ser-159. The interval 137–243 (AAAAAAAAAS…VMILRSRFLD (107 aa)) is PBC-B. The homeobox; TALE-type DNA-binding region spans 244-306 (ARRKRRNFSK…NKRIRYKKNI (63 aa)). 2 disordered regions span residues 327–347 (GGHS…GGSF) and 375–430 (LRHS…DTSN). 2 positions are modified to phosphoserine: Ser-330 and Ser-395. A compositionally biased stretch (polar residues) spans 409 to 418 (VTPSSVTSPT).

Belongs to the TALE/PBX homeobox family. Forms heterodimers with MEIS1 and heterotrimers with MEIS1 and HOXA9. Interacts with PBXIP1.

The protein localises to the nucleus. Transcriptional activator that binds the sequence 5'-ATCAATCAA-3'. Activates transcription of PF4 in complex with MEIS1. This Mus musculus (Mouse) protein is Pre-B-cell leukemia transcription factor 2 (Pbx2).